The following is a 342-amino-acid chain: Phosphoribosylformylglycinamidine cyclo-ligase (342 aa).

It belongs to the AIR synthase family.

It is found in the cytoplasm. It catalyses the reaction 2-formamido-N(1)-(5-O-phospho-beta-D-ribosyl)acetamidine + ATP = 5-amino-1-(5-phospho-beta-D-ribosyl)imidazole + ADP + phosphate + H(+). The protein operates within purine metabolism; IMP biosynthesis via de novo pathway; 5-amino-1-(5-phospho-D-ribosyl)imidazole from N(2)-formyl-N(1)-(5-phospho-D-ribosyl)glycinamide: step 2/2. The protein is Phosphoribosylformylglycinamidine cyclo-ligase of Staphylococcus aureus (strain bovine RF122 / ET3-1).